The following is a 160-amino-acid chain: Cytochrome b6-f complex subunit 4 (160 aa).

3 helical membrane passes run 36–56, 95–115, and 131–151; these read LLYM…GLAV, LLGV…PFIE, and TVFL…TLPI.

The protein belongs to the cytochrome b family. PetD subfamily. The 4 large subunits of the cytochrome b6-f complex are cytochrome b6, subunit IV (17 kDa polypeptide, petD), cytochrome f and the Rieske protein, while the 4 small subunits are petG, petL, petM and petN. The complex functions as a dimer.

The protein resides in the plastid. Its subcellular location is the chloroplast thylakoid membrane. Functionally, component of the cytochrome b6-f complex, which mediates electron transfer between photosystem II (PSII) and photosystem I (PSI), cyclic electron flow around PSI, and state transitions. This Nephroselmis olivacea (Green alga) protein is Cytochrome b6-f complex subunit 4.